The sequence spans 358 residues: DnaJ homolog subfamily C member 18 (358 aa).

The J domain maps to 82-146; the sequence is NYYEILGVSR…DKRLRYDEYG (65 aa). A helical membrane pass occupies residues 228 to 248; sequence AFIQLLPVLVIVIISVITQLL.

It is found in the endoplasmic reticulum membrane. The polypeptide is DnaJ homolog subfamily C member 18 (DNAJC18) (Macaca fascicularis (Crab-eating macaque)).